Consider the following 244-residue polypeptide: Octanoyltransferase (244 aa).

In terms of domain architecture, BPL/LPL catalytic spans Val49–Ile237. Substrate contacts are provided by residues Arg94–His101, Ala167–Gly169, and Gly180–Ala182. Cys198 acts as the Acyl-thioester intermediate in catalysis.

This sequence belongs to the LipB family.

It is found in the cytoplasm. It carries out the reaction octanoyl-[ACP] + L-lysyl-[protein] = N(6)-octanoyl-L-lysyl-[protein] + holo-[ACP] + H(+). The protein operates within protein modification; protein lipoylation via endogenous pathway; protein N(6)-(lipoyl)lysine from octanoyl-[acyl-carrier-protein]: step 1/2. In terms of biological role, catalyzes the transfer of endogenously produced octanoic acid from octanoyl-acyl-carrier-protein onto the lipoyl domains of lipoate-dependent enzymes. Lipoyl-ACP can also act as a substrate although octanoyl-ACP is likely to be the physiological substrate. In Cytophaga hutchinsonii (strain ATCC 33406 / DSM 1761 / CIP 103989 / NBRC 15051 / NCIMB 9469 / D465), this protein is Octanoyltransferase.